Consider the following 385-residue polypeptide: Heptahelical transmembrane protein 4 (385 aa).

Over residues 1 to 12 (MGDEAEIKEHLK) the composition is skewed to basic and acidic residues. The tract at residues 1 to 22 (MGDEAEIKEHLKPQASSETMDK) is disordered. Over 1 to 79 (MGDEAEIKEH…LSIFTIHNET (79 aa)) the chain is Cytoplasmic. Residues 80–100 (LNVWTHLIGFFLFLALTIYTA) form a helical membrane-spanning segment. At 101 to 191 (TKVPSVVDLH…LIFRPITRWP (91 aa)) the chain is on the extracellular side. The chain crosses the membrane as a helical span at residues 192-212 (FYAFLGGAMFCLLASSTCHLL). Residues 213 to 228 (SCHSERVSYIMLRLDY) lie on the Cytoplasmic side of the membrane. Residues 229–249 (AGIAALIATSFYPPVYYSFMC) form a helical membrane-spanning segment. The Extracellular segment spans residues 250–256 (DPFFCNL). Residues 257-277 (YLGFITILGIATVLVSLLPVF) form a helical membrane-spanning segment. The Cytoplasmic portion of the chain corresponds to 278–288 (QSPEFRVVRAS). A helical transmembrane segment spans residues 289-309 (LFFGMGFSGLAPILHKLIIFW). The Extracellular segment spans residues 310–313 (DQPE). A helical transmembrane segment spans residues 314-334 (ALHTTGYEILMGLLYGLGALV). Over 335–356 (YATRIPERWMPGKFDIAGHSHQ) the chain is Cytoplasmic. A helical membrane pass occupies residues 357 to 377 (LFHVLVVAGAFTHYRAGLVYL).

It belongs to the ADIPOR family. Expressed in roots, leaves, stems and flowers.

The protein resides in the membrane. Functionally, may play a role in abiotic stress response. In Arabidopsis thaliana (Mouse-ear cress), this protein is Heptahelical transmembrane protein 4 (HHP4).